A 157-amino-acid polypeptide reads, in one-letter code: Lipoprotein signal peptidase (157 aa).

Transmembrane regions (helical) follow at residues 10 to 30, 58 to 78, and 84 to 104; these read LIFI…KYAI, FLEG…FIFL, and LFKN…SNVL. Active-site residues include Asp-114 and Asp-131. The helical transmembrane segment at 122–142 threads the bilayer; the sequence is FDFAIFNFADVMIDVGVGVLL.

Belongs to the peptidase A8 family.

The protein resides in the cell inner membrane. It carries out the reaction Release of signal peptides from bacterial membrane prolipoproteins. Hydrolyzes -Xaa-Yaa-Zaa-|-(S,diacylglyceryl)Cys-, in which Xaa is hydrophobic (preferably Leu), and Yaa (Ala or Ser) and Zaa (Gly or Ala) have small, neutral side chains.. The protein operates within protein modification; lipoprotein biosynthesis (signal peptide cleavage). In terms of biological role, this protein specifically catalyzes the removal of signal peptides from prolipoproteins. In Helicobacter pylori (strain Shi470), this protein is Lipoprotein signal peptidase.